Consider the following 415-residue polypeptide: Peptide chain release factor subunit 1 (415 aa).

It belongs to the eukaryotic release factor 1 family. In terms of assembly, heterodimer of two subunits, one of which binds GTP.

Its subcellular location is the cytoplasm. Functionally, directs the termination of nascent peptide synthesis (translation) in response to the termination codons UAA, UAG and UGA. This Methanosarcina mazei (strain ATCC BAA-159 / DSM 3647 / Goe1 / Go1 / JCM 11833 / OCM 88) (Methanosarcina frisia) protein is Peptide chain release factor subunit 1.